Here is a 542-residue protein sequence, read N- to C-terminus: DM7 family protein GG17591 (542 aa).

The segment covering 415–430 (GETQEMDEAHPTKEES) has biased composition (basic and acidic residues). Residues 415–443 (GETQEMDEAHPTKEESKSEEEGEVQSGSQ) form a disordered region.

Belongs to the DM7 family.

The polypeptide is DM7 family protein GG17591 (Drosophila erecta (Fruit fly)).